We begin with the raw amino-acid sequence, 156 residues long: ATP synthase subunit b (156 aa).

A helical membrane pass occupies residues 4–26 (GATFWGPMISFALFVWFTMKFVW).

It belongs to the ATPase B chain family. F-type ATPases have 2 components, F(1) - the catalytic core - and F(0) - the membrane proton channel. F(1) has five subunits: alpha(3), beta(3), gamma(1), delta(1), epsilon(1). F(0) has three main subunits: a(1), b(2) and c(10-14). The alpha and beta chains form an alternating ring which encloses part of the gamma chain. F(1) is attached to F(0) by a central stalk formed by the gamma and epsilon chains, while a peripheral stalk is formed by the delta and b chains.

It is found in the cell inner membrane. Functionally, f(1)F(0) ATP synthase produces ATP from ADP in the presence of a proton or sodium gradient. F-type ATPases consist of two structural domains, F(1) containing the extramembraneous catalytic core and F(0) containing the membrane proton channel, linked together by a central stalk and a peripheral stalk. During catalysis, ATP synthesis in the catalytic domain of F(1) is coupled via a rotary mechanism of the central stalk subunits to proton translocation. In terms of biological role, component of the F(0) channel, it forms part of the peripheral stalk, linking F(1) to F(0). In Halorhodospira halophila (strain DSM 244 / SL1) (Ectothiorhodospira halophila (strain DSM 244 / SL1)), this protein is ATP synthase subunit b.